Here is a 231-residue protein sequence, read N- to C-terminus: High-affinity zinc uptake system ATP-binding protein ZnuC (231 aa).

The ABC transporter domain maps to 4–230 (VSLKDIVFGY…CLTWNSCDEL (227 aa)).

The protein belongs to the ABC transporter superfamily. As to quaternary structure, the complex is composed of two ATP-binding proteins (ZnuC), two transmembrane proteins (ZnuB) and a solute-binding protein (ZnuA).

It is found in the cell membrane. The enzyme catalyses Zn(2+)(out) + ATP(in) + H2O(in) = Zn(2+)(in) + ADP(in) + phosphate(in) + H(+)(in). Part of the high-affinity ABC transporter complex ZnuABC involved in zinc import. Responsible for energy coupling to the transport system. ZnuABC-mediated zinc transport is required for comF expression and competence development. This is High-affinity zinc uptake system ATP-binding protein ZnuC (znuC) from Bacillus subtilis (strain 168).